The chain runs to 1331 residues: Mitogen-activated protein kinase kinase kinase 15 (1331 aa).

The segment covering 1-13 (MEGGGGSGGGGGP) has biased composition (gly residues). A disordered region spans residues 1-61 (MEGGGGSGGG…GEAEGGRGPR (61 aa)). A Protein kinase domain is found at 656–912 (NGERVVLGKG…AADLLQEGFL (257 aa)). ATP contacts are provided by residues 662 to 670 (LGKGSYGIV) and K685. D777 functions as the Proton acceptor in the catalytic mechanism. Disordered stretches follow at residues 934–964 (GTGT…SDAQ) and 983–1005 (LSVP…EERD). Residues 940–962 (LPSSGELVGSSSSEHGSISPDSD) are compositionally biased toward low complexity. The span at 992-1005 (LDDRSTALPPEERD) shows a compositional bias: basic and acidic residues. Residues 1216-1236 (LVQKEREYQNLLRLILDQKTQ) are a coiled coil.

The protein belongs to the protein kinase superfamily. STE Ser/Thr protein kinase family. MAP kinase kinase kinase subfamily. Mg(2+) serves as cofactor.

The catalysed reaction is L-seryl-[protein] + ATP = O-phospho-L-seryl-[protein] + ADP + H(+). It catalyses the reaction L-threonyl-[protein] + ATP = O-phospho-L-threonyl-[protein] + ADP + H(+). Contains an N-terminal autoinhibitory domain. Activated by phosphorylation at Thr-816, inhibited by phosphorylation at Ser-928. Functionally, serine/threonine kinase which acts as a component of the MAP kinase signal transduction pathway. Once activated, acts as an upstream activator of the p38 MAPK signal transduction cascade through the phosphorylation and activation of several MAP kinase kinases. May function in a signal transduction pathway that is activated by various cell stresses and leads to apoptosis. Involved in phosphorylation of WNK4 in response to osmotic stress or hypotonic low-chloride stimulation via the p38 MAPK signal transduction cascade. The sequence is that of Mitogen-activated protein kinase kinase kinase 15 from Mus musculus (Mouse).